Consider the following 261-residue polypeptide: Expansin-B2 (261 aa).

A signal peptide spans 1–24; that stretch reads MAGASAKVVAMLLSVLATYGFAAG. Residues 51-157 form the Expansin-like EG45 domain; it reads GGACGFKNTN…RRVPCYHRGL (107 aa). Intrachain disulfides connect Cys54/Cys82, Cys85/Cys152, and Cys90/Cys96. An Expansin-like CBD domain is found at 170–256; it reads VYLAVLVEFA…NWRANTNYGS (87 aa).

This sequence belongs to the expansin family. Expansin B subfamily. In terms of tissue distribution, expressed in roots.

It is found in the secreted. It localises to the cell wall. The protein resides in the membrane. Functionally, may cause loosening and extension of plant cell walls by disrupting non-covalent bonding between cellulose microfibrils and matrix glucans. No enzymatic activity has been found. May be required for rapid internodal elongation in deepwater rice during submergence. In Oryza sativa subsp. japonica (Rice), this protein is Expansin-B2 (EXPB2).